We begin with the raw amino-acid sequence, 209 residues long: Nascent polypeptide-associated complex subunit alpha-like protein 5 (209 aa).

The segment at 23 to 71 (EKEDDVVVEDVKDGEEEDDDEDDEDVEVEGEGGNENAKQSRSEKKSRKA) is disordered. A compositionally biased stretch (acidic residues) spans 25 to 54 (EDDVVVEDVKDGEEEDDDEDDEDVEVEGEG). The region spanning 62–127 (SRSEKKSRKA…AKVDDLSSQL (66 aa)) is the NAC-A/B domain. Residues 170 to 207 (VEARDIDLVMTQAGVSKAKAVSALKANDGDIVSAIMEL) form the UBA domain.

Belongs to the NAC-alpha family.

In terms of biological role, may promote appropriate targeting of ribosome-nascent polypeptide complexes. This Arabidopsis thaliana (Mouse-ear cress) protein is Nascent polypeptide-associated complex subunit alpha-like protein 5.